The following is a 202-amino-acid chain: Zinc metalloproteinase barnettlysin-1 (202 aa).

Positions Arg6–Asn200 constitute a Peptidase M12B domain. Ca(2+)-binding residues include Glu9 and Asp93. 3 disulfide bridges follow: Cys117–Cys197, Cys157–Cys181, and Cys159–Cys164. His142 is a Zn(2+) binding site. Residue Glu143 is part of the active site. Positions 146 and 152 each coordinate Zn(2+). Ca(2+) contacts are provided by Cys197 and Asn200.

In terms of assembly, monomer. Zn(2+) serves as cofactor. As to expression, expressed by the venom gland.

It is found in the secreted. Non-hemorrhagic metalloproteinase that hydrolyzes the alpha chains of fibrinogen and fibrin but has no activity on beta- and gamma-chains. Cleaves X-Leu bonds. Inhibits platelet aggregation induced by the von Willebrand factor (VWF) (IC(50) is 1.4 uM) and type I collagen (IC(50) is 3.2 uM). Acts by cleaving the vWF and its receptor GPIb, and by cleaving the collagen-binding Alpha-2A domain of the collagen receptor alpha-2/beta-1 integrin (ITGA2/ITGB1). Also degrades the extracellular matrix protein fibronectin (FN1), but has no effect on laminin and type I collagen. This Bothrops barnetti (Barnett's lancehead) protein is Zinc metalloproteinase barnettlysin-1.